We begin with the raw amino-acid sequence, 410 residues long: Mating-type locus allele B7 protein (410 aa).

The variable domain between B alleles stretch occupies residues 1–110 (MSSDPNFSLT…VNVGSPAVGC (110 aa)). The segment at residues 107–184 (AVGCRNLSED…NARRRSGWSH (78 aa)) is a DNA-binding region (homeobox; TALE-type). The interval 111–410 (RNLSEDLPAY…PFLCLSVAFV (300 aa)) is highly conserved between B alleles. Disordered stretches follow at residues 202-225 (RAKL…SNNL), 278-336 (TPKP…PELS), and 374-394 (ARGN…QPDE). Positions 276–308 (KKTPKPGMPRPVTTVAKRQPARKTKPAAKPNSR) match the Nuclear localization signal motif. Residues 306–336 (NSRTANPRASTTPSIDSTLDSSKLESTPELS) are compositionally biased toward polar residues. Residues 333-410 (PELSMCSTAD…PFLCLSVAFV (78 aa)) are not essential for B7 function. Residues 375–388 (RGNRKVKALPKRAG) show a composition bias toward basic residues.

It belongs to the TALE/M-ATYP homeobox family.

The protein resides in the nucleus. Its function is as follows. The B locus has at least 25 alleles, and any combination of two different B alleles yields a multimeric regulatory protein, that activates genes responsible for the pathogenicity and for the sexual development of the fungus within the corn plant. The polypeptide is Mating-type locus allele B7 protein (Mycosarcoma maydis (Corn smut fungus)).